We begin with the raw amino-acid sequence, 304 residues long: Acetaldehyde dehydrogenase (304 aa).

Cysteine 131 acts as the Acyl-thioester intermediate in catalysis. Residues 162–170 and asparagine 273 each bind NAD(+); that span reads SAGPGTRKN.

This sequence belongs to the acetaldehyde dehydrogenase family.

The enzyme catalyses acetaldehyde + NAD(+) + CoA = acetyl-CoA + NADH + H(+). This Polaromonas naphthalenivorans (strain CJ2) protein is Acetaldehyde dehydrogenase.